A 104-amino-acid chain; its full sequence is UPF0213 protein in VLF1-GP41 intergenic region (104 aa).

Residues 9 to 89 (KVWCVYILRQ…SKYFKLRLIK (81 aa)) enclose the GIY-YIG domain.

This sequence belongs to the UPF0213 family.

This Autographa californica nuclear polyhedrosis virus (AcMNPV) protein is UPF0213 protein in VLF1-GP41 intergenic region.